The chain runs to 275 residues: Large ribosomal subunit protein uL2 (275 aa).

Disordered regions lie at residues Gly36 to Gly55 and Val224 to Lys263.

Belongs to the universal ribosomal protein uL2 family. As to quaternary structure, part of the 50S ribosomal subunit. Forms a bridge to the 30S subunit in the 70S ribosome.

Its function is as follows. One of the primary rRNA binding proteins. Required for association of the 30S and 50S subunits to form the 70S ribosome, for tRNA binding and peptide bond formation. It has been suggested to have peptidyltransferase activity; this is somewhat controversial. Makes several contacts with the 16S rRNA in the 70S ribosome. The polypeptide is Large ribosomal subunit protein uL2 (Rhodospirillum centenum (strain ATCC 51521 / SW)).